We begin with the raw amino-acid sequence, 489 residues long: Betaine aldehyde dehydrogenase (489 aa).

The K(+) site is built by threonine 26 and aspartate 93. 150–152 (GAW) is an NAD(+) binding site. The Charge relay system role is filled by lysine 162. Residue 176 to 179 (KPSE) participates in NAD(+) binding. Residue valine 180 coordinates K(+). 229–232 (GVET) is an NAD(+) binding site. A K(+)-binding site is contributed by leucine 245. Glutamate 251 (proton acceptor) is an active-site residue. Positions 253, 285, and 386 each coordinate NAD(+). Catalysis depends on cysteine 285, which acts as the Nucleophile. Cysteine sulfenic acid (-SOH) is present on cysteine 285. Positions 456 and 459 each coordinate K(+). The active-site Charge relay system is the glutamate 463.

This sequence belongs to the aldehyde dehydrogenase family. As to quaternary structure, dimer of dimers. Requires K(+) as cofactor.

The catalysed reaction is betaine aldehyde + NAD(+) + H2O = glycine betaine + NADH + 2 H(+). The protein operates within amine and polyamine biosynthesis; betaine biosynthesis via choline pathway; betaine from betaine aldehyde: step 1/1. Functionally, involved in the biosynthesis of the osmoprotectant glycine betaine. Catalyzes the irreversible oxidation of betaine aldehyde to the corresponding acid. The protein is Betaine aldehyde dehydrogenase of Burkholderia orbicola (strain AU 1054).